We begin with the raw amino-acid sequence, 155 residues long: Small ribosomal subunit protein uS7c (155 aa).

This sequence belongs to the universal ribosomal protein uS7 family. In terms of assembly, part of the 30S ribosomal subunit.

The protein localises to the plastid. Its subcellular location is the chloroplast. One of the primary rRNA binding proteins, it binds directly to 16S rRNA where it nucleates assembly of the head domain of the 30S subunit. The sequence is that of Small ribosomal subunit protein uS7c (rps7) from Staurastrum punctulatum (Green alga).